Here is a 435-residue protein sequence, read N- to C-terminus: UPF0597 protein AHA_4077 (435 aa).

This sequence belongs to the UPF0597 family.

This Aeromonas hydrophila subsp. hydrophila (strain ATCC 7966 / DSM 30187 / BCRC 13018 / CCUG 14551 / JCM 1027 / KCTC 2358 / NCIMB 9240 / NCTC 8049) protein is UPF0597 protein AHA_4077.